A 485-amino-acid chain; its full sequence is MGLVNIMRFITFAYIICGGFILTRTSGTSASASPATPTTNTGEGTSSPVTPTYTTSTDSNNSTATNNSTDVNGTEATPTPSHPHSHENTITCTNSLISVPYYTSVTINCSTTVSVNHSEYRLEIHLNQRTPFSDTPPGDQENYVNHNATKDQTLLLFSTAHSSAKSRRVGQLGVIPDRLPKRQLFNLPAHTNGGTNFPLNIKSIDWRTAGVYVWYLFAKNGSLINSTSVTVLTYNAPLMDLSVHPSLKGENHRAVCVVASYFPHNSVKLRWYKNAKEVDFTKYVTNASSVWVDGLITRISTVSIPADPDEEYPPSLRCSIEWYRDEVSFSRMAKAGTPSVFVAPTVSVNVEDGAAVCTAECVPSNGVFVSWVVNDHLPGVPSQDVTTGVCSSHPGLVNMRSSRPLSEENGEREYNCIIEGYPDGLPMFSDSVVYDASPIVEDMPVLTGIIAVTCGAAALALVVLITAVCFYCSKPSQVPYKKADF.

Positions 1–32 are cleaved as a signal peptide; that stretch reads MGLVNIMRFITFAYIICGGFILTRTSGTSASA. The span at 28–72 shows a compositional bias: low complexity; that stretch reads TSASASPATPTTNTGEGTSSPVTPTYTTSTDSNNSTATNNSTDVN. Residues 28–88 form a disordered region; it reads TSASASPATP…TPSHPHSHEN (61 aa). Residues 33–444 lie on the Virion surface side of the membrane; it reads SPATPTTNTG…DASPIVEDMP (412 aa). 11 N-linked (GlcNAc...) asparagine; by host glycosylation sites follow: asparagine 60, asparagine 61, asparagine 66, asparagine 67, asparagine 72, asparagine 108, asparagine 116, asparagine 147, asparagine 220, asparagine 225, and asparagine 286. An intrachain disulfide couples cysteine 92 to cysteine 109. Residues 237 to 330 enclose the Ig-like domain; sequence PLMDLSVHPS…EWYRDEVSFS (94 aa). 3 disulfide bridges follow: cysteine 256/cysteine 318, cysteine 357/cysteine 416, and cysteine 361/cysteine 390. The chain crosses the membrane as a helical span at residues 445 to 468; that stretch reads VLTGIIAVTCGAAALALVVLITAV. Topologically, residues 469–485 are cytoplasmic; sequence CFYCSKPSQVPYKKADF.

It belongs to the herpesviridae glycoprotein C family. In terms of assembly, interacts with host complement component C3; this interaction inhibits host immune response by disregulating complement cascade.

It is found in the virion membrane. Essential for the initial attachment to heparan sulfate moieties of the host cell surface proteoglycans. Also plays a role in host immune evasion by inhibiting the host complement cascade activation. The protein is Envelope glycoprotein C (gC) of Equine herpesvirus 4 (strain 1942) (EHV-4).